We begin with the raw amino-acid sequence, 658 residues long: Probable CoA ligase CCL6 (658 aa).

Residues 226-234 (TSGATGEPK), 411-416 (QGYGLT), Asp497, 509-512 (IIDR), and Lys632 contribute to the ATP site. An SBD1 region spans residues 298–411 (DIRFLMDDLQ…RVTSCAALSQ (114 aa)). An SBD2 region spans residues 412–477 (GYGLTESCGG…LRGTTLFSGY (66 aa)).

This sequence belongs to the ATP-dependent AMP-binding enzyme family. In terms of tissue distribution, mostly expressed in glandular trichomes (lupulin glands) after flowering, and, to a lower extent, in stems, leaves, cones and flowers.

Its subcellular location is the cytoplasm. It localises to the cytosol. This is Probable CoA ligase CCL6 from Humulus lupulus (European hop).